A 171-amino-acid chain; its full sequence is Lipoprotein signal peptidase (171 aa).

Transmembrane regions (helical) follow at residues 12 to 32 (WYWV…WVLA), 67 to 87 (WQRW…TVWL), and 93 to 113 (SLLK…GNLV). Residues Asp-123 and Asp-141 contribute to the active site. The chain crosses the membrane as a helical span at residues 137–157 (FNIADSAICIGAVLIIWDAFL).

The protein belongs to the peptidase A8 family.

It is found in the cell inner membrane. The enzyme catalyses Release of signal peptides from bacterial membrane prolipoproteins. Hydrolyzes -Xaa-Yaa-Zaa-|-(S,diacylglyceryl)Cys-, in which Xaa is hydrophobic (preferably Leu), and Yaa (Ala or Ser) and Zaa (Gly or Ala) have small, neutral side chains.. It participates in protein modification; lipoprotein biosynthesis (signal peptide cleavage). Functionally, this protein specifically catalyzes the removal of signal peptides from prolipoproteins. The sequence is that of Lipoprotein signal peptidase from Shewanella baltica (strain OS223).